Consider the following 782-residue polypeptide: General transcription and DNA repair factor IIH helicase/translocase subunit XPB (782 aa).

Positions 1-11 (MGKRDRADRDK) are enriched in basic and acidic residues. Disordered regions lie at residues 1–51 (MGKR…ESGT) and 220–240 (ISKT…DPQG). The Nuclear localization signal motif lies at 6 to 18 (RADRDKKKSRKRH). The span at 21 to 30 (DEEDDEEDAP) shows a compositional bias: acidic residues. A Helicase ATP-binding domain is found at 327–488 (MFGNGRARSG…DLNFLIGPKL (162 aa)). 340–347 (LPCGAGKS) lines the ATP pocket. The DEVH box motif lies at 441-444 (DEVH). Residues 542 to 702 (RACQFLIKFH…LAGMEEEDLA (161 aa)) form the Helicase C-terminal domain. Serine 686 is subject to Phosphoserine. Serine 751 carries the post-translational modification Phosphoserine; by CK2.

The protein belongs to the helicase family. RAD25/XPB subfamily. Component of the 7-subunit TFIIH core complex composed of XPB/ERCC3, XPD/ERCC2, GTF2H1, GTF2H2, GTF2H3, GTF2H4 and GTF2H5, which is active in NER. The core complex associates with the 3-subunit CDK-activating kinase (CAK) module composed of CCNH/cyclin H, CDK7 and MNAT1 to form the 10-subunit holoenzyme (holo-TFIIH) active in transcription. Interacts with PUF60. Interacts with ATF7IP. Interacts with KAT2A; leading to KAT2A recruitment to promoters and acetylation of histones. Part of TBP-based Pol II pre-initiation complex (PIC), in which Pol II core assembles with general transcription factors and other specific initiation factors including GTF2E1, GTF2E2, GTF2F1, GTF2F2, TCEA1, ERCC2, ERCC3, GTF2H2, GTF2H3, GTF2H4, GTF2H5, GTF2A1, GTF2A2, GTF2B and TBP; this large multi-subunit PIC complex mediates DNA unwinding and targets Pol II core to the transcription start site where the first phosphodiester bond forms. Phosphorylation on Ser-751 by CK2 controls the 5'-excision activity of ERCC1-XPF endonuclease; phosphorylated protein inhibits the excision activity and thus NER. Dephosphorylation reactivates the 5'-excision step. Phosphorylation has no effect on transcription or the 3'-5' helicase activity.

The protein resides in the nucleus. The enzyme catalyses Couples ATP hydrolysis with the unwinding of duplex DNA by translocating in the 3'-5' direction.. It catalyses the reaction ATP + H2O = ADP + phosphate + H(+). Phosphorylation on Ser-751 by CK2 controls the 5'-excision activity of ERCC1-XPF endonuclease; phosphorylated protein inhibits the excision activity and thus NER. ATPase activity is stimulated by TFIIH subunit p52 (GTF2H4). DNA translocase activity by this subunit in TFIIH is stimulated by XPA, ERCC5/XPG and XFP plus ERCC1. Its function is as follows. ATP-dependent 3'-5' DNA helicase/translocase; binds dsDNA rather than ssDNA, unzipping it in a translocase rather than classical helicase activity. Component of the general transcription and DNA repair factor IIH (TFIIH) core complex. When complexed to CDK-activating kinase (CAK), involved in RNA transcription by RNA polymerase II. The ATPase activity of XPB/ERCC3, but not its helicase activity, is required for DNA opening; it may wrap around the damaged DNA wedging it open, causing localized melting and twisting that allows XPD/ERCC2 helicase to anchor. The ATP-dependent helicase activity of XPB/ERCC3 may be required for promoter escape. Also involved in transcription-coupled nucleotide excision repair (NER) of damaged DNA. In NER, TFIIH acts by opening DNA around the lesion to allow the excision of the damaged oligonucleotide and its replacement by a new DNA fragment. The structure of the TFIIH transcription complex differs from the NER-TFIIH complex; large movements by XPD/ERCC2 and XPB/ERCC3 are stabilized by XPA. The protein is General transcription and DNA repair factor IIH helicase/translocase subunit XPB (ERCC3) of Macaca fascicularis (Crab-eating macaque).